We begin with the raw amino-acid sequence, 271 residues long: Ubiquitin thioesterase OTUB1 (271 aa).

N-acetylalanine is present on alanine 2. Position 16 is a phosphoserine (serine 16). Tyrosine 26 bears the Phosphotyrosine mark. Residues 80–271 form the OTU domain; sequence SYIRKTRPDG…RPGHYDILYK (192 aa). Aspartate 88 is a catalytic residue. Residue cysteine 91 is the Nucleophile of the active site. 2 ubiquitin-conjugating enzyme E2 binding regions span residues 130 to 138 and 169 to 177; these read FTEFTIEDF and DYLVVYLRL. The segment at 189 to 195 is free ubiquitin binding; the sequence is FFEHFIE. The tract at residues 206 to 213 is ubiquitin-conjugating enzyme E2 binding; the sequence is QEVEPMCK. 2 free ubiquitin binding regions span residues 214–221 and 245–251; these read ESDHIHII and NPHVFPE. Residue histidine 265 is part of the active site.

Belongs to the peptidase C65 family. Interacts with RNF128. Forms a ternary complex with RNF128 and USP8. Interacts with FUS and RACK1. Interacts with UBE2D1/UBCH5A, UBE2W/UBC16 and UBE2N/UBC13. Post-translationally, phosphorylation at Tyr-26 by SRC and SRMS promotes deubiquitination of RPTOR via a non-catalytic process.

It localises to the cytoplasm. It catalyses the reaction Thiol-dependent hydrolysis of ester, thioester, amide, peptide and isopeptide bonds formed by the C-terminal Gly of ubiquitin (a 76-residue protein attached to proteins as an intracellular targeting signal).. By free ubiquitin: binding of free ubiquitin triggers conformational changes in the OTU domain and formation of a ubiquitin-binding helix in the N-terminus, promoting binding of the conjugated donor ubiquitin in UBE2N/UBC13 to OTUB1. Functionally, hydrolase that can specifically remove compared to 'Lys-48'-linked conjugated ubiquitin from proteins and plays an important regulatory role at the level of protein turnover by preventing degradation. Regulator of T-cell anergy, a phenomenon that occurs when T-cells are rendered unresponsive to antigen rechallenge and no longer respond to their cognate antigen. Acts via its interaction with RNF128/GRAIL. Surprisingly, it regulates RNF128-mediated ubiquitination, but does not deubiquitinate polyubiquitinated RNF128. Deubiquitinates estrogen receptor alpha (ESR1). Mediates deubiquitination of 'Lys-48'-linked polyubiquitin chains, but not 'Lys-63'-linked polyubiquitin chains. Not able to cleave di-ubiquitin. Also capable of removing NEDD8 from NEDD8 conjugates, but with a much lower preference compared to 'Lys-48'-linked ubiquitin. In terms of biological role, plays a key non-catalytic role in DNA repair regulation by inhibiting activity of RNF168, an E3 ubiquitin-protein ligase that promotes accumulation of 'Lys-63'-linked histone H2A and H2AX at DNA damage sites. Inhibits RNF168 independently of ubiquitin thioesterase activity by binding and inhibiting UBE2N/UBC13, the E2 partner of RNF168, thereby limiting spreading of 'Lys-63'-linked histone H2A and H2AX marks. Inhibition occurs by binding to free ubiquitin: free ubiquitin acts as an allosteric regulator that increases affinity for UBE2N/UBC13 and disrupts interaction with UBE2V1. The OTUB1-UBE2N/UBC13-free ubiquitin complex adopts a configuration that mimics a cleaved 'Lys48'-linked di-ubiquitin chain. Acts as a regulator of mTORC1 and mTORC2 complexes. When phosphorylated at Tyr-26, acts as an activator of the mTORC1 complex by mediating deubiquitination of RPTOR via a non-catalytic process: acts by binding and inhibiting the activity of the ubiquitin-conjugating enzyme E2 (UBE2D1/UBCH5A, UBE2W/UBC16 and UBE2N/UBC13), thereby preventing ubiquitination of RPTOR. Can also act as an inhibitor of the mTORC1 and mTORC2 complexes in response to amino acids by mediating non-catalytic deubiquitination of DEPTOR. The protein is Ubiquitin thioesterase OTUB1 (Otub1) of Mus musculus (Mouse).